The sequence spans 199 residues: Probable nicotinate-nucleotide adenylyltransferase (199 aa).

The protein belongs to the NadD family.

It carries out the reaction nicotinate beta-D-ribonucleotide + ATP + H(+) = deamido-NAD(+) + diphosphate. The protein operates within cofactor biosynthesis; NAD(+) biosynthesis; deamido-NAD(+) from nicotinate D-ribonucleotide: step 1/1. In terms of biological role, catalyzes the reversible adenylation of nicotinate mononucleotide (NaMN) to nicotinic acid adenine dinucleotide (NaAD). In Roseiflexus sp. (strain RS-1), this protein is Probable nicotinate-nucleotide adenylyltransferase.